The sequence spans 227 residues: Superoxide dismutase [Cu-Zn] (227 aa).

An N-terminal signal peptide occupies residues 1-19 (MPKLLPPVVLAGCVVALGA). Cysteine 20 carries the N-palmitoyl cysteine lipid modification. A lipid anchor (S-diacylglycerol cysteine) is attached at cysteine 20. The segment at 23–55 (PQHASSLPGTTPAVWTGSPSPSGAGAAEAAPAA) is disordered. A compositionally biased stretch (low complexity) spans 39-55 (GSPSPSGAGAAEAAPAA). Histidine 103 and histidine 105 together coordinate Cu cation. An intrachain disulfide couples cysteine 110 to cysteine 221. Residue aspartate 145 coordinates Zn(2+). Histidine 182 provides a ligand contact to Cu cation.

This sequence belongs to the Cu-Zn superoxide dismutase family. The cofactor is Cu cation. It depends on Zn(2+) as a cofactor.

The protein resides in the cell membrane. The enzyme catalyses 2 superoxide + 2 H(+) = H2O2 + O2. Its function is as follows. Destroys radicals which are normally produced within the cells and which are toxic to biological systems. May play a role in favoring mycobacterial survival in phagocytes. This chain is Superoxide dismutase [Cu-Zn] (sodC), found in Mycolicibacterium paratuberculosis (strain ATCC BAA-968 / K-10) (Mycobacterium paratuberculosis).